Reading from the N-terminus, the 141-residue chain is Galactose-6-phosphate isomerase subunit LacA (141 aa).

It belongs to the LacAB/RpiB family. Heteromultimeric protein consisting of LacA and LacB.

The enzyme catalyses aldehydo-D-galactose 6-phosphate = keto-D-tagatose 6-phosphate. Its pathway is carbohydrate metabolism; D-galactose 6-phosphate degradation; D-tagatose 6-phosphate from D-galactose 6-phosphate: step 1/1. The protein is Galactose-6-phosphate isomerase subunit LacA of Streptococcus pneumoniae (strain ATCC 700669 / Spain 23F-1).